The following is a 330-amino-acid chain: tRNA(Ile)-lysidine synthase (330 aa).

Residue 31–36 (SGGQDS) participates in ATP binding.

Belongs to the tRNA(Ile)-lysidine synthase family.

The protein resides in the cytoplasm. The catalysed reaction is cytidine(34) in tRNA(Ile2) + L-lysine + ATP = lysidine(34) in tRNA(Ile2) + AMP + diphosphate + H(+). Functionally, ligates lysine onto the cytidine present at position 34 of the AUA codon-specific tRNA(Ile) that contains the anticodon CAU, in an ATP-dependent manner. Cytidine is converted to lysidine, thus changing the amino acid specificity of the tRNA from methionine to isoleucine. The chain is tRNA(Ile)-lysidine synthase from Synechocystis sp. (strain ATCC 27184 / PCC 6803 / Kazusa).